The following is a 2291-amino-acid chain: Protein Ycf2 B (2291 aa).

Position 1642–1649 (1642–1649 (GSIGTGRS)) interacts with ATP.

Belongs to the Ycf2 family.

The protein resides in the plastid. It is found in the chloroplast stroma. Probable ATPase of unknown function. Its presence in a non-photosynthetic plant (Epifagus virginiana) and experiments in tobacco indicate that it has an essential function which is probably not related to photosynthesis. The sequence is that of Protein Ycf2 B (ycf2-B) from Atropa belladonna (Belladonna).